A 368-amino-acid chain; its full sequence is Core-capsid bridging protein (368 aa).

2 disordered regions span residues 17–49 and 307–340; these read EIYG…DELD and GYRG…QPVL. A compositionally biased stretch (basic and acidic residues) spans 22-31; sequence PKKEEQDYKP. 2 stretches are compositionally biased toward basic residues: residues 32-41 and 314-337; these read RKLKRVKKKK and RPRR…RRRQ.

This sequence belongs to the adenoviridae core-capsid bridging protein family. As to quaternary structure, monomer. Homodimer. Exists in equilibrium between monomers and dimers in solution. Interacts with the histone-like nucleoprotein; this interactions bridge the virus core to the capsid. Interacts with core protein X; this interactions bridge the virus core to the capsid. Interacts with the endosome lysis protein VI; this interactions bridge the virus core to the capsid. Interacts with the peripentonal hexons. Interacts with host NPM1; this interaction might play a role in virus assembly. Post-translationally, during virion entry, is ubiquitinated at the nuclear pore complex by host MIB1. This dissociates viral genomic DNA from capsid and allows genome delivery into nucleus for infection.

The protein resides in the virion. Its subcellular location is the host nucleus. It is found in the host nucleolus. Functionally, associates loosely with the viral DNA to form an outer shell around the nucleoprotein-DNA complex and links it with the capsid by binding the endosome lysis protein. During entry, secures the viral genome in the capsid until it reaches the nuclear pore complex, preventing innate immunity responses. Dissociates from the viral genome at nuclear pore. Might be involved in nuclear capsid assembly of the viral particles through its association with NPM1/nucleophosmin. The protein is Core-capsid bridging protein of Human adenovirus C serotype 5 (HAdV-5).